Here is a 274-residue protein sequence, read N- to C-terminus: 3-methyl-2-oxobutanoate hydroxymethyltransferase (274 aa).

Mg(2+) contacts are provided by Asp46 and Asp85. 3-methyl-2-oxobutanoate is bound by residues 46–47, Asp85, and Lys115; that span reads DS. Glu117 contacts Mg(2+). Catalysis depends on Glu184, which acts as the Proton acceptor.

It belongs to the PanB family. In terms of assembly, homodecamer; pentamer of dimers. It depends on Mg(2+) as a cofactor.

Its subcellular location is the cytoplasm. The enzyme catalyses 3-methyl-2-oxobutanoate + (6R)-5,10-methylene-5,6,7,8-tetrahydrofolate + H2O = 2-dehydropantoate + (6S)-5,6,7,8-tetrahydrofolate. It functions in the pathway cofactor biosynthesis; coenzyme A biosynthesis. Its function is as follows. Catalyzes the reversible reaction in which hydroxymethyl group from 5,10-methylenetetrahydrofolate is transferred onto alpha-ketoisovalerate to form ketopantoate. The polypeptide is 3-methyl-2-oxobutanoate hydroxymethyltransferase (Halobacterium salinarum (strain ATCC 29341 / DSM 671 / R1)).